The sequence spans 300 residues: Zinc finger CCCH-type antiviral protein 1-like (300 aa).

At Ala2 the chain carries N-acetylalanine. The segment covering 252 to 263 (NTDNSSPSTEHS) has biased composition (polar residues). The disordered stretch occupies residues 252 to 300 (NTDNSSPSTEHSQGLEKQGVHAAGAAEAGPLASVPAQSAKKPCPVSCEK). Residues 271–283 (VHAAGAAEAGPLA) are compositionally biased toward low complexity.

The sequence is that of Zinc finger CCCH-type antiviral protein 1-like (ZC3HAV1L) from Homo sapiens (Human).